Here is a 394-residue protein sequence, read N- to C-terminus: Elongation factor Tu (394 aa).

The tr-type G domain maps to 10-204 (KPHVNVGTIG…HLDTYIPEPE (195 aa)). Residues 19–26 (GHVDHGKT) form a G1 region. 19 to 26 (GHVDHGKT) provides a ligand contact to GTP. Thr26 contributes to the Mg(2+) binding site. The interval 60–64 (GITIN) is G2. A G3 region spans residues 81-84 (DCPG). GTP is bound by residues 81–85 (DCPGH) and 136–139 (NKCD). Positions 136–139 (NKCD) are G4. The segment at 174-176 (SAL) is G5.

This sequence belongs to the TRAFAC class translation factor GTPase superfamily. Classic translation factor GTPase family. EF-Tu/EF-1A subfamily. Monomer.

It is found in the cytoplasm. The enzyme catalyses GTP + H2O = GDP + phosphate + H(+). Its function is as follows. GTP hydrolase that promotes the GTP-dependent binding of aminoacyl-tRNA to the A-site of ribosomes during protein biosynthesis. This is Elongation factor Tu from Aeromonas salmonicida (strain A449).